Reading from the N-terminus, the 143-residue chain is MAIERTFSIIKPDAVAKNHIGAIYNRFETAGLKIIASKMVHLSQEQAEGFYAEHSERPFFGALVAFMTSGPIMVQTLEGENAVLAHREILGATNPAEAAEGTIRADFAESIDENAAHGSDSVASAEREVAYFFSTEELCPRTR.

ATP contacts are provided by Lys11, Phe59, Arg87, Thr93, Arg104, and Asn114. Catalysis depends on His117, which acts as the Pros-phosphohistidine intermediate.

Belongs to the NDK family. Homotetramer. It depends on Mg(2+) as a cofactor.

It is found in the cytoplasm. The enzyme catalyses a 2'-deoxyribonucleoside 5'-diphosphate + ATP = a 2'-deoxyribonucleoside 5'-triphosphate + ADP. It carries out the reaction a ribonucleoside 5'-diphosphate + ATP = a ribonucleoside 5'-triphosphate + ADP. Major role in the synthesis of nucleoside triphosphates other than ATP. The ATP gamma phosphate is transferred to the NDP beta phosphate via a ping-pong mechanism, using a phosphorylated active-site intermediate. This is Nucleoside diphosphate kinase from Shewanella piezotolerans (strain WP3 / JCM 13877).